Here is a 1382-residue protein sequence, read N- to C-terminus: ABC-type transporter atr1 (1382 aa).

Over residues 1-12 (MRFRSDSRADHQ) the composition is skewed to basic and acidic residues. A disordered region spans residues 1–56 (MRFRSDSRADHQHPKKQGSMDPDTIQALKYQDRSSSSSSNNKPKEKVGSASTSPSP). A glycan (N-linked (GlcNAc...) asparagine) is linked at N62. The next 6 helical transmembrane spans lie at 101–121 (LFGT…NIFI), 159–179 (LILL…MAVF), 233–253 (LPMA…AFAF), 259–279 (LVLL…GALT), 339–359 (GVGV…AFFY), and 374–394 (IVSV…LFSM). The ABC transmembrane type-1 1 domain occupies 101-400 (LFGTGMAIAA…LFSMIENFTM (300 aa)). Residue N397 is glycosylated (N-linked (GlcNAc...) asparagine). The ABC transporter 1 domain occupies 445–688 (LKLDHVHFAY…PNGTFASMLR (244 aa)). 480–487 (GLSGSGKS) is an ATP binding site. Residue N680 is glycosylated (N-linked (GlcNAc...) asparagine). Positions 738–768 (SVKPKDPSKNFEPPGESYASPAADGVKQDAP) are disordered. The ABC transmembrane type-1 2 domain occupies 797–1094 (LGSLCAAIIG…IFNYSADFSS (298 aa)). The helical transmembrane segment at 800–820 (LCAAIIGAVYPVYAILFGTAI) threads the bilayer. N827 carries an N-linked (GlcNAc...) asparagine glycan. A helical transmembrane segment spans residues 848-868 (ISSGSFFIVAVGCAFISFYHV). Residue N903 is glycosylated (N-linked (GlcNAc...) asparagine). Helical transmembrane passes span 911–931 (SLSV…GSIV) and 951–973 (LALV…LRVL). A glycan (N-linked (GlcNAc...) asparagine) is linked at N1020. The next 2 membrane-spanning stretches (helical) occupy residues 1034-1054 (VLFG…FWYG) and 1067-1087 (GFFT…NIFN). In terms of domain architecture, ABC transporter 2 spans 1136-1377 (IALKEVTFRY…DGLFALMARL (242 aa)). 1171–1178 (GGSGSGKS) is a binding site for ATP. The N-linked (GlcNAc...) asparagine glycan is linked to N1324.

The protein belongs to the ABC transporter superfamily. ABCB family. Multidrug resistance exporter (TC 3.A.1.201) subfamily.

It localises to the cell membrane. ABC-type transporter; part of the gene cluster that mediates the biosynthesis of the glycolipid biosurfactant ustilagic acid (UA). UA is a secreted cellobiose glycolipid that is toxic for many microorganisms and confers biocontrol activity to U.maydis. Export of UA is presumably catalyzed by the ABC transporter atr1. Atr1 appears to be quite unspecific, as many of the UA derivatives produced by cluster mutant strains are readily exported. The polypeptide is ABC-type transporter atr1 (Mycosarcoma maydis (Corn smut fungus)).